Here is a 430-residue protein sequence, read N- to C-terminus: N-acylneuraminate cytidylyltransferase A (430 aa).

The disordered stretch occupies residues 1–29; it reads MDAVNENGKRAMKDDSHGNSTSPKRRKSR. Over residues 7–17 the composition is skewed to basic and acidic residues; sequence NGKRAMKDDSH. The short motif at 9–27 is the Bipartite nuclear localization signal element; that stretch reads KRAMKDDSHGNSTSPKRRK. Substrate-binding residues include arginine 38, asparagine 48, arginine 97, serine 106, serine 108, and glutamine 129. Arginine 187 is an active-site residue.

This sequence belongs to the CMP-NeuNAc synthase family. As to quaternary structure, homotetramer.

Its subcellular location is the nucleus. The catalysed reaction is an N-acylneuraminate + CTP = a CMP-N-acyl-beta-neuraminate + diphosphate. It functions in the pathway amino-sugar metabolism; N-acetylneuraminate metabolism. Its function is as follows. Catalyzes the activation of N-acetylneuraminic acid (NeuNAc) to cytidine 5'-monophosphate N-acetylneuraminic acid (CMP-NeuNAc), a substrate required for the addition of sialic acid. Also has activity towards N-glycolylneuraminic acid (Neu5Gc). Has weak activity towards 2-keto-3-deoxy-D-glycero-D-galacto-nononic acid (KDN). In Danio rerio (Zebrafish), this protein is N-acylneuraminate cytidylyltransferase A.